A 237-amino-acid polypeptide reads, in one-letter code: MTRRYWNIDLEEMIGAGVSFGHGTRKWNPKMAPYISVKHKGIHFTNLTKTARFLSEACDLVFYAASRGKQFLIVDTKNKAADSAAWAAIKARCHCVNKKWPGGMLTNWSTTETRLHKLRDLIMEQKAGRLNRLKKKDEAAVKRQLARLQTYLGGIKYMTRLPDIVIIVDQHEEYKALHECITIGIPTIGLIDTNCDPDLADISIPANDDAISSIRLILNKLVFAICEGRSGYIIKNI.

The protein belongs to the universal ribosomal protein uS2 family.

Its subcellular location is the plastid. This Epifagus virginiana (Beechdrops) protein is Small ribosomal subunit protein uS2c (rps2).